The chain runs to 394 residues: Candidapepsin (394 aa).

The N-terminal stretch at 1–23 (MATIFLFTKNVFIALAFALFAQG) is a signal peptide. The propeptide at 24 to 60 (LTIPDGIEKRTDKVVSLDFTVIRKPFNATAHRLIQKR) is activation peptide. Asn50 is a glycosylation site (N-linked (GlcNAc...) asparagine). Residues 74–381 (YAADIVVGSN…DLDDKTISLA (308 aa)) enclose the Peptidase A1 domain. Asp92 is a catalytic residue. A disulfide bridge links Cys107 with Cys119. The active site involves Asp278. Cys314 and Cys347 form a disulfide bridge.

The protein belongs to the peptidase A1 family. In terms of processing, O-glycosylated.

Its subcellular location is the secreted. The catalysed reaction is Preferential cleavage at the carboxyl of hydrophobic amino acids, but fails to cleave 15-Leu-|-Tyr-16, 16-Tyr-|-Leu-17 and 24-Phe-|-Phe-25 of insulin B chain. Activates trypsinogen, and degrades keratin.. The protein is Candidapepsin (SAPT1) of Candida tropicalis (Yeast).